The following is a 73-amino-acid chain: Translation initiation factor IF-1 (73 aa).

The 73-residue stretch at 1-73 folds into the S1-like domain; that stretch reads MSEKEAGIEV…SRGRITYRDK (73 aa).

Belongs to the IF-1 family. Component of the 30S ribosomal translation pre-initiation complex which assembles on the 30S ribosome in the order IF-2 and IF-3, IF-1 and N-formylmethionyl-tRNA(fMet); mRNA recruitment can occur at any time during PIC assembly.

The protein resides in the cytoplasm. One of the essential components for the initiation of protein synthesis. Stabilizes the binding of IF-2 and IF-3 on the 30S subunit to which N-formylmethionyl-tRNA(fMet) subsequently binds. Helps modulate mRNA selection, yielding the 30S pre-initiation complex (PIC). Upon addition of the 50S ribosomal subunit IF-1, IF-2 and IF-3 are released leaving the mature 70S translation initiation complex. The chain is Translation initiation factor IF-1 from Anaeromyxobacter dehalogenans (strain 2CP-C).